A 397-amino-acid polypeptide reads, in one-letter code: Cercosporin biosynthesis regulatory protein CTB8 (397 aa).

A DNA-binding region (zn(2)-C6 fungal-type) is located at residues 26-53 (CTHCSSQKIRCTKERPACARCVNKGLLC). Disordered stretches follow at residues 63-90 (TRRHSVRATPEPETTISNAPTSSVAPDS) and 173-198 (AEASTRPSSSSSPPSQRSDGGRATTH). The segment covering 74 to 87 (PETTISNAPTSSVA) has biased composition (polar residues). Low complexity predominate over residues 179–197 (PSSSSSPPSQRSDGGRATT).

It localises to the nucleus. Transcription regulator of the gene cluster that mediates the biosynthesis of cercosporin, a light-activated, non-host-selective toxin. The perylenequinone chromophore of cercosporin absorbs light energy to attain an electronically-activated triplet state and produces active oxygen species such as the hydroxyl radical, superoxide, hydrogen peroxide or singlet oxygen upon reaction with oxygen molecules. These reactive oxygen species cause damage to various cellular components including lipids, proteins and nucleic acids. The sequence is that of Cercosporin biosynthesis regulatory protein CTB8 from Cercospora beticola (Sugarbeet leaf spot fungus).